Consider the following 339-residue polypeptide: Dihydroorotase (339 aa).

2 residues coordinate Zn(2+): histidine 12 and histidine 14. Substrate contacts are provided by residues 14–16 (HVR) and asparagine 40. Residues lysine 94, histidine 133, histidine 167, and aspartate 239 each coordinate Zn(2+). Lysine 94 is modified (N6-carboxylysine). Histidine 133 lines the substrate pocket. Residue aspartate 239 is part of the active site. Substrate-binding residues include histidine 243 and alanine 255.

Belongs to the metallo-dependent hydrolases superfamily. DHOase family. Class II DHOase subfamily. As to quaternary structure, homodimer. Requires Zn(2+) as cofactor.

It catalyses the reaction (S)-dihydroorotate + H2O = N-carbamoyl-L-aspartate + H(+). Its pathway is pyrimidine metabolism; UMP biosynthesis via de novo pathway; (S)-dihydroorotate from bicarbonate: step 3/3. In terms of biological role, catalyzes the reversible cyclization of carbamoyl aspartate to dihydroorotate. This Helicobacter pylori (strain HPAG1) protein is Dihydroorotase.